Here is a 25-residue protein sequence, read N- to C-terminus: Panurgine K (25 aa).

Cystine bridges form between C8-C23 and C11-C19.

Its subcellular location is the target cell membrane. The protein resides in the secreted. Its function is as follows. Antimicrobial peptide active against Gram-positive bacteria M.luteus (MIC=1.6 uM) and B.subtilis (MIC=3.3 uM). Less active against Gram-negative bacteria E.coli (MIC=63.3 uM) and yeast C.albicans (MIC=24.2 uM). Not active against S.aureus and P.aeruginosa. Has no hemolytic activity against human erythrocytes. Probably acts by disrupting membranes of target cells. The polypeptide is Panurgine K (Panurgus calcaratus (Solitary bee)).